The sequence spans 774 residues: Probable ubiquitin-like-specific protease 2A (774 aa).

Positions 118 to 141 are disordered; it reads SSLSENDEVSTGEATNPASDPHEV. Residues histidine 400, aspartate 430, and cysteine 485 contribute to the active site. The segment at 548 to 568 is disordered; that stretch reads ILPANSKSEPPHCGVSNRNDQ.

It belongs to the peptidase C48 family.

Functionally, protease that catalyzes two essential functions in the SUMO pathway: processing of full-length SUMOs to their mature forms and deconjugation of SUMO from targeted proteins. The polypeptide is Probable ubiquitin-like-specific protease 2A (ULP2A) (Arabidopsis thaliana (Mouse-ear cress)).